Here is a 1316-residue protein sequence, read N- to C-terminus: DNA-directed RNA polymerase subunit beta' (1316 aa).

Zn(2+) is bound by residues Cys60, Cys62, Cys75, and Cys78. Positions 535, 537, and 539 each coordinate Mg(2+). Zn(2+)-binding residues include Cys891, Cys968, Cys975, and Cys978.

It belongs to the RNA polymerase beta' chain family. The RNAP catalytic core consists of 2 alpha, 1 beta, 1 beta' and 1 omega subunit. When a sigma factor is associated with the core the holoenzyme is formed, which can initiate transcription. Requires Mg(2+) as cofactor. It depends on Zn(2+) as a cofactor.

The enzyme catalyses RNA(n) + a ribonucleoside 5'-triphosphate = RNA(n+1) + diphosphate. Its function is as follows. DNA-dependent RNA polymerase catalyzes the transcription of DNA into RNA using the four ribonucleoside triphosphates as substrates. This Mycobacterium marinum (strain ATCC BAA-535 / M) protein is DNA-directed RNA polymerase subunit beta'.